We begin with the raw amino-acid sequence, 370 residues long: sn-glycerol-3-phosphate import ATP-binding protein UgpC (370 aa).

In terms of domain architecture, ABC transporter spans 4–235 (LRLDGIRKRY…PATRFVASFL (232 aa)). 37–44 (GPSGCGKS) provides a ligand contact to ATP.

Belongs to the ABC transporter superfamily. sn-glycerol-3-phosphate importer (TC 3.A.1.1.3) family. As to quaternary structure, the complex is composed of two ATP-binding proteins (UgpC), two transmembrane proteins (UgpA and UgpE) and a solute-binding protein (UgpB).

The protein resides in the cell inner membrane. It carries out the reaction sn-glycerol 3-phosphate(out) + ATP + H2O = sn-glycerol 3-phosphate(in) + ADP + phosphate + H(+). Its function is as follows. Part of the ABC transporter complex UgpBAEC involved in sn-glycerol-3-phosphate (G3P) import. Responsible for energy coupling to the transport system. The sequence is that of sn-glycerol-3-phosphate import ATP-binding protein UgpC from Chromohalobacter salexigens (strain ATCC BAA-138 / DSM 3043 / CIP 106854 / NCIMB 13768 / 1H11).